A 549-amino-acid chain; its full sequence is Cytoplasmic trehalase (549 aa).

Substrate contacts are provided by residues arginine 168, 175–176 (WD), asparagine 212, 221–223 (RSQ), 292–294 (RDE), and glycine 324. Residues aspartate 326 and glutamate 509 each act as proton donor/acceptor in the active site. Glutamate 525 is a substrate binding site.

This sequence belongs to the glycosyl hydrolase 37 family. In terms of assembly, monomer.

The protein resides in the cytoplasm. It carries out the reaction alpha,alpha-trehalose + H2O = alpha-D-glucose + beta-D-glucose. It participates in glycan degradation; trehalose degradation; D-glucose from alpha,alpha-trehalose: step 1/1. In terms of biological role, hydrolyzes trehalose to glucose. Could be involved, in cells returning to low osmolarity conditions, in the utilization of the accumulated cytoplasmic trehalose, which was synthesized in response to high osmolarity. The protein is Cytoplasmic trehalase of Escherichia coli O139:H28 (strain E24377A / ETEC).